A 159-amino-acid polypeptide reads, in one-letter code: Large ribosomal subunit protein eL24 (159 aa).

The segment at 118-159 (ANKAVRAAKAAANKEKKASQPKTQQKTAKNVKTAAPRVGGKR) is disordered. Residues 137–147 (QPKTQQKTAKN) show a composition bias toward polar residues.

Belongs to the eukaryotic ribosomal protein eL24 family.

The sequence is that of Large ribosomal subunit protein eL24 from Caenorhabditis elegans.